The sequence spans 291 residues: ATP synthase subunit a (291 aa).

A run of 5 helical transmembrane segments spans residues 48–68 (IHLDSMGWSIGLGIIFCLVFW), 108–128 (IAPLALTIFVWIFLMNLMDLI), 161–181 (DPNITLGMSLSVFVLILFYSI), 241–261 (LIFILIALLPFWIQWALSVPW), and 262–282 (AIFHILVITLQAFIFMMLTIV).

It belongs to the ATPase A chain family. As to quaternary structure, F-type ATPases have 2 components, CF(1) - the catalytic core - and CF(0) - the membrane proton channel. CF(1) has five subunits: alpha(3), beta(3), gamma(1), delta(1), epsilon(1). CF(0) has three main subunits: a(1), b(2) and c(9-12). The alpha and beta chains form an alternating ring which encloses part of the gamma chain. CF(1) is attached to CF(0) by a central stalk formed by the gamma and epsilon chains, while a peripheral stalk is formed by the delta and b chains.

It is found in the cell inner membrane. Its function is as follows. Key component of the proton channel; it plays a direct role in the translocation of protons across the membrane. The sequence is that of ATP synthase subunit a from Acinetobacter baylyi (strain ATCC 33305 / BD413 / ADP1).